Here is a 447-residue protein sequence, read N- to C-terminus: Tubulin beta-4 chain (447 aa).

Positions 11, 71, 140, 144, 145, 146, 206, and 228 each coordinate GTP. Mg(2+) is bound at residue E71. The tract at residues 428-447 (QDATAEEYEEEEHDGEEEHA) is disordered. Residues 431-447 (TAEEYEEEEHDGEEEHA) show a composition bias toward acidic residues.

Belongs to the tubulin family. In terms of assembly, dimer of alpha and beta chains. A typical microtubule is a hollow water-filled tube with an outer diameter of 25 nm and an inner diameter of 15 nM. Alpha-beta heterodimers associate head-to-tail to form protofilaments running lengthwise along the microtubule wall with the beta-tubulin subunit facing the microtubule plus end conferring a structural polarity. Microtubules usually have 13 protofilaments but different protofilament numbers can be found in some organisms and specialized cells. Mg(2+) serves as cofactor.

Its subcellular location is the cytoplasm. The protein localises to the cytoskeleton. Tubulin is the major constituent of microtubules, a cylinder consisting of laterally associated linear protofilaments composed of alpha- and beta-tubulin heterodimers. Microtubules grow by the addition of GTP-tubulin dimers to the microtubule end, where a stabilizing cap forms. Below the cap, tubulin dimers are in GDP-bound state, owing to GTPase activity of alpha-tubulin. This chain is Tubulin beta-4 chain (TUBB4), found in Zea mays (Maize).